Consider the following 156-residue polypeptide: Cyclic pyranopterin monophosphate synthase (156 aa).

Residues 73–75 (LCH) and 110–111 (ME) each bind substrate. Residue Asp125 is part of the active site.

The protein belongs to the MoaC family. Homohexamer; trimer of dimers.

It catalyses the reaction (8S)-3',8-cyclo-7,8-dihydroguanosine 5'-triphosphate = cyclic pyranopterin phosphate + diphosphate. It functions in the pathway cofactor biosynthesis; molybdopterin biosynthesis. Catalyzes the conversion of (8S)-3',8-cyclo-7,8-dihydroguanosine 5'-triphosphate to cyclic pyranopterin monophosphate (cPMP). The protein is Cyclic pyranopterin monophosphate synthase of Pseudomonas entomophila (strain L48).